A 194-amino-acid chain; its full sequence is Thiol:disulfide interchange protein CycY (194 aa).

The first 37 residues, 1-37 (MSEQSTSANPQRRTFLMVLPLIAFIGLALLFWFRLGS), serve as a signal peptide directing secretion. The region spanning 46–190 (ALIGRPAPQT…LRSVLLPQME (145 aa)) is the Thioredoxin domain. A disulfide bond links Cys-92 and Cys-95.

Belongs to the thioredoxin family. DsbE subfamily.

The protein localises to the periplasm. Required for disulfide bond formation in some periplasmic proteins. Also acts as a disulfide oxidoreductase in cytochromes c biogenesis. The cysteines of apocytochromes c must be in the reduced state for covalent linkage between the two moieties to occur. This Bradyrhizobium diazoefficiens (strain JCM 10833 / BCRC 13528 / IAM 13628 / NBRC 14792 / USDA 110) protein is Thiol:disulfide interchange protein CycY (cycY).